Reading from the N-terminus, the 124-residue chain is Small ribosomal subunit protein uS12 (124 aa).

The segment at 1-28 is disordered; that stretch reads MPTINQLVRKGRTPKVSKTKAPALKGSP. Positions 9–18 are enriched in basic residues; it reads RKGRTPKVSK. At aspartate 89 the chain carries 3-methylthioaspartic acid.

It belongs to the universal ribosomal protein uS12 family. Part of the 30S ribosomal subunit. Contacts proteins S8 and S17. May interact with IF1 in the 30S initiation complex.

Its function is as follows. With S4 and S5 plays an important role in translational accuracy. Interacts with and stabilizes bases of the 16S rRNA that are involved in tRNA selection in the A site and with the mRNA backbone. Located at the interface of the 30S and 50S subunits, it traverses the body of the 30S subunit contacting proteins on the other side and probably holding the rRNA structure together. The combined cluster of proteins S8, S12 and S17 appears to hold together the shoulder and platform of the 30S subunit. The polypeptide is Small ribosomal subunit protein uS12 (Paenarthrobacter aurescens (strain TC1)).